The primary structure comprises 276 residues: MNETQSNEQILKLFIVSDSIGETAQRMIHATLTQFPDLHNVEIKKFPYIKDEEEFLNILNLAREQHAIVATTLVSESFNALGHQFAHEHDIPYVDYMSDLISIIEKVTHSQPLMESGALRKLNDEYFKRIEAIEYSVKYDDGKHFTDIGEADALIVGVSRTSKTPLSMYLANKGYKIANIPLVPEIEIPDNVYKQKGLKVFGLTASPQYIANIRKNRAETLGLSSESRYNNLDRIKKELVYAEEVFKKLNATVINTEYKSIEESAFYIEKFLQPKL.

Position 157–164 (157–164 (GVSRTSKT)) interacts with ADP.

This sequence belongs to the pyruvate, phosphate/water dikinase regulatory protein family. PDRP subfamily.

The catalysed reaction is N(tele)-phospho-L-histidyl/L-threonyl-[pyruvate, phosphate dikinase] + ADP = N(tele)-phospho-L-histidyl/O-phospho-L-threonyl-[pyruvate, phosphate dikinase] + AMP + H(+). It catalyses the reaction N(tele)-phospho-L-histidyl/O-phospho-L-threonyl-[pyruvate, phosphate dikinase] + phosphate + H(+) = N(tele)-phospho-L-histidyl/L-threonyl-[pyruvate, phosphate dikinase] + diphosphate. Bifunctional serine/threonine kinase and phosphorylase involved in the regulation of the pyruvate, phosphate dikinase (PPDK) by catalyzing its phosphorylation/dephosphorylation. This Staphylococcus haemolyticus (strain JCSC1435) protein is Putative pyruvate, phosphate dikinase regulatory protein 1.